We begin with the raw amino-acid sequence, 224 residues long: GTP cyclohydrolase 1 (224 aa).

The segment at 1–20 (MKQEKTVSPTVENNRSAESR) is disordered. Zn(2+) contacts are provided by C114, H117, and C185.

This sequence belongs to the GTP cyclohydrolase I family. As to quaternary structure, toroid-shaped homodecamer, composed of two pentamers of five dimers.

The enzyme catalyses GTP + H2O = 7,8-dihydroneopterin 3'-triphosphate + formate + H(+). The protein operates within cofactor biosynthesis; 7,8-dihydroneopterin triphosphate biosynthesis; 7,8-dihydroneopterin triphosphate from GTP: step 1/1. The polypeptide is GTP cyclohydrolase 1 (Chlorobaculum tepidum (strain ATCC 49652 / DSM 12025 / NBRC 103806 / TLS) (Chlorobium tepidum)).